A 238-amino-acid polypeptide reads, in one-letter code: Probable transcriptional regulatory protein MGAS10750_Spy0264 (238 aa).

The protein belongs to the TACO1 family. YeeN subfamily.

Its subcellular location is the cytoplasm. The polypeptide is Probable transcriptional regulatory protein MGAS10750_Spy0264 (Streptococcus pyogenes serotype M4 (strain MGAS10750)).